A 156-amino-acid chain; its full sequence is Probable cyclic pyranopterin monophosphate synthase (156 aa).

Residues 74 to 76 (LCH) and 110 to 111 (ME) each bind substrate. The active site involves D125.

Belongs to the MoaC family. As to quaternary structure, homohexamer; trimer of dimers.

It catalyses the reaction (8S)-3',8-cyclo-7,8-dihydroguanosine 5'-triphosphate = cyclic pyranopterin phosphate + diphosphate. The protein operates within cofactor biosynthesis; molybdopterin biosynthesis. In terms of biological role, catalyzes the conversion of (8S)-3',8-cyclo-7,8-dihydroguanosine 5'-triphosphate to cyclic pyranopterin monophosphate (cPMP). In Thermococcus kodakarensis (strain ATCC BAA-918 / JCM 12380 / KOD1) (Pyrococcus kodakaraensis (strain KOD1)), this protein is Probable cyclic pyranopterin monophosphate synthase.